A 130-amino-acid polypeptide reads, in one-letter code: Small ribosomal subunit protein uS9 (130 aa).

This sequence belongs to the universal ribosomal protein uS9 family.

The chain is Small ribosomal subunit protein uS9 from Shewanella loihica (strain ATCC BAA-1088 / PV-4).